We begin with the raw amino-acid sequence, 399 residues long: uncharacterized protein (399 aa).

The tract at residues alanine 375–arginine 399 is disordered.

This sequence belongs to the mycobacterial PPE family.

This is an uncharacterized protein from Mycobacterium tuberculosis (strain ATCC 25618 / H37Rv).